We begin with the raw amino-acid sequence, 1161 residues long: DNA-directed RNA polymerase III subunit 2 (1161 aa).

The C4-type zinc finger occupies cysteine 1104–cysteine 1125.

It belongs to the RNA polymerase beta chain family. As to quaternary structure, component of the RNA polymerase III (Pol III) complex consisting of 17 subunits.

It is found in the nucleus. The catalysed reaction is RNA(n) + a ribonucleoside 5'-triphosphate = RNA(n+1) + diphosphate. DNA-dependent RNA polymerase catalyzes the transcription of DNA into RNA using the four ribonucleoside triphosphates as substrates. Second largest core component of RNA polymerase III which synthesizes small RNAs, such as 5S rRNA and tRNAs. Proposed to contribute to the polymerase catalytic activity and forms the polymerase active center together with the largest subunit. Pol III is composed of mobile elements and NRPC2 is part of the core element with the central large cleft and probably a clamp element that moves to open and close the cleft. Functionally, essential for the completion of the three rounds of mitosis in female megaspores required for the development of mature gametophytes. This chain is DNA-directed RNA polymerase III subunit 2, found in Arabidopsis thaliana (Mouse-ear cress).